The sequence spans 419 residues: Hyaluronan synthase (419 aa).

Transmembrane regions (helical) follow at residues 8-28 (LIVL…MYLF), 33-53 (VGIY…LSFL), 318-338 (IVAL…VAIG), 345-365 (AIQL…IVAL), and 376-396 (PASF…LQPL).

Belongs to the NodC/HAS family. Mg(2+) serves as cofactor.

The protein localises to the cell membrane. The catalysed reaction is [hyaluronan](n) + UDP-N-acetyl-alpha-D-glucosamine = N-acetyl-beta-D-glucosaminyl-(1-&gt;4)-[hyaluronan](n) + UDP + H(+). It catalyses the reaction N-acetyl-beta-D-glucosaminyl-(1-&gt;4)-[hyaluronan](n) + UDP-alpha-D-glucuronate = [hyaluronan](n+1) + UDP + H(+). It functions in the pathway glycan biosynthesis; hyaluronan biosynthesis. Functionally, glycosaminoglycan synthesis. The hyaluronic acid capsule is involved in the pathogenicity of group A Streptococci; it may be the major virulence determinant. In Streptococcus pyogenes serotype M6 (strain ATCC BAA-946 / MGAS10394), this protein is Hyaluronan synthase (hasA).